The chain runs to 256 residues: Phosphonates import ATP-binding protein PhnC (256 aa).

The ABC transporter domain occupies 2-246 (LKVIQLDKTY…VLQHIYRQPD (245 aa)). ATP is bound at residue 35-42 (GPSGAGKT).

This sequence belongs to the ABC transporter superfamily. Phosphonates importer (TC 3.A.1.9.1) family. As to quaternary structure, the complex is composed of two ATP-binding proteins (PhnC), two transmembrane proteins (PhnE) and a solute-binding protein (PhnD).

The protein resides in the cell membrane. The enzyme catalyses phosphonate(out) + ATP + H2O = phosphonate(in) + ADP + phosphate + H(+). In terms of biological role, part of the ABC transporter complex PhnCDE involved in phosphonates import. Responsible for energy coupling to the transport system. This is Phosphonates import ATP-binding protein PhnC from Lactiplantibacillus plantarum (strain ATCC BAA-793 / NCIMB 8826 / WCFS1) (Lactobacillus plantarum).